A 504-amino-acid polypeptide reads, in one-letter code: MQFFSLVSIFLFLSFLFLLRKWKNSNSQSKKLPPGPWKIPILGSMLHMIGGEPHHVLRDLAKKYGPLMHLQLGEISAVVVTSRDMAKEVLKTHDVVFASRPKIVAMDIICYNQSDIAFSPYGDHWRQMRKICVMELLNAKNVRSFSSIRRDEVVRLIDSIRSDSSSGELVNFTQRIIWFASSMTCRSAFGQVLKGQDIFAKKIREVIGLAEGFDVVDIFPTYKFLHVLSGMKRKLLNAHLKVDAIVEDVINEHKKNLAAGKSNGALGGEDLIDVLLRLMNDTSLQFPITNDNIKAVIVDMFAAGTETSSTTTVWAMAEMMKNPSVFTKAQAEVREAFRDKVSFDENDVEELKYLKLVIKETLRLHPPSPLLVPRECREDTDINGYTIPAKTKVMVNVWALGRDPKYWDDAESFKPERFEQCSVDFFGNNFEFLPFGGGRRICPGMSFGLANLYLPLAQLLYHFDWKLPTGIMPRDLDLTELSGITIARKGGLYLNATPYQPSRE.

The helical transmembrane segment at 2–22 (QFFSLVSIFLFLSFLFLLRKW) threads the bilayer. C442 provides a ligand contact to heme.

This sequence belongs to the cytochrome P450 family. Heme serves as cofactor.

The protein resides in the membrane. It carries out the reaction (+)-5-epi-aristolochene + 2 reduced [NADPH--hemoprotein reductase] + 2 O2 = capsidiol + 2 oxidized [NADPH--hemoprotein reductase] + 2 H2O + 2 H(+). Its activity is regulated as follows. Inhibited by ancymidol and ketoconazole. In terms of biological role, involved in the biosynthesis of capsidiol. Catalyzes the successive and independent hydroxylations at the C1 and C3 positions of 5-epiaristolochene. The second hydroxylation step is 8-fold more efficient than the first hydroxylation reaction. Capable of utilizing premnaspirodiene as a substrate. The sequence is that of 5-epiaristolochene 1,3-dihydroxylase (CYP71D20) from Nicotiana tabacum (Common tobacco).